Reading from the N-terminus, the 427-residue chain is Enolase (427 aa).

Residue Gln-163 participates in (2R)-2-phosphoglycerate binding. Glu-205 acts as the Proton donor in catalysis. Residues Asp-242, Glu-285, and Asp-312 each contribute to the Mg(2+) site. (2R)-2-phosphoglycerate contacts are provided by Lys-337, Arg-366, Ser-367, and Lys-388. Residue Lys-337 is the Proton acceptor of the active site.

It belongs to the enolase family. Requires Mg(2+) as cofactor.

Its subcellular location is the cytoplasm. The protein localises to the secreted. It localises to the cell surface. It carries out the reaction (2R)-2-phosphoglycerate = phosphoenolpyruvate + H2O. The protein operates within carbohydrate degradation; glycolysis; pyruvate from D-glyceraldehyde 3-phosphate: step 4/5. Its function is as follows. Catalyzes the reversible conversion of 2-phosphoglycerate (2-PG) into phosphoenolpyruvate (PEP). It is essential for the degradation of carbohydrates via glycolysis. The chain is Enolase from Dechloromonas aromatica (strain RCB).